A 74-amino-acid chain; its full sequence is Sodium channel neurotoxin MeuNaTxalpha-6 (74 aa).

The signal sequence occupies residues 1-7; that stretch reads LMTGVES. One can recognise an LCN-type CS-alpha/beta domain in the interval 9–73; the sequence is RDAYIAKPHN…VPIRIPGKCH (65 aa). 4 disulfide bridges follow: cysteine 19–cysteine 72, cysteine 23–cysteine 45, cysteine 31–cysteine 55, and cysteine 35–cysteine 57. A propeptide (removed by a carboxypeptidase) is located at residue arginine 74.

It belongs to the long (4 C-C) scorpion toxin superfamily. Sodium channel inhibitor family. Alpha subfamily. Expressed by the venom gland.

The protein localises to the secreted. Functionally, alpha toxins bind voltage-independently at site-3 of sodium channels (Nav) and inhibit the inactivation of the activated channels, thereby blocking neuronal transmission. In Mesobuthus eupeus (Lesser Asian scorpion), this protein is Sodium channel neurotoxin MeuNaTxalpha-6.